The following is a 310-amino-acid chain: Olfactory receptor 9A2 (310 aa).

The Extracellular portion of the chain corresponds to 1–24 (MMDNHSSATEFHLLGFPGSQGLHH). N-linked (GlcNAc...) asparagine glycosylation is present at asparagine 4. The helical transmembrane segment at 25–45 (ILFAIFFFFYLVTLMGNTVII) threads the bilayer. Residues 46–53 (VIVCVDKR) are Cytoplasmic-facing. A helical membrane pass occupies residues 54–74 (LQSPMYFFLSHLSTLEILVTT). Topologically, residues 75-98 (IIVPMMLWGLLFLGCRQYLSLHVS) are extracellular. Residues 117-135 (DRYVAVCNPLRYNIIMNSS) lie on the Cytoplasmic side of the membrane. The chain crosses the membrane as a helical span at residues 136–156 (TCIWVVIVSWVFGFLSEIWPI). Topologically, residues 157-193 (YATFQFTFRKSNSLDHFYCDRGQLLKLSCDNTLLTEF) are extracellular. The helical transmembrane segment at 194–213 (ILFLMAVFILIGSLIPTIVS) threads the bilayer. At 214–233 (YTYIISTILKIPSASGRRKA) the chain is on the cytoplasmic side. The chain crosses the membrane as a helical span at residues 234–254 (FSTFASHFTCVVIGYGSCLFL). The Extracellular portion of the chain corresponds to 255 to 267 (YVKPKQTQGVEYN). Residues 268-288 (KIVSLLVSVLTPFLNPFIFTL) form a helical membrane-spanning segment. Residues 289–310 (RNDKVKEALRDGMKRCCQLLKD) are Cytoplasmic-facing.

This sequence belongs to the G-protein coupled receptor 1 family.

The protein resides in the cell membrane. Functionally, odorant receptor. The sequence is that of Olfactory receptor 9A2 (OR9A2) from Homo sapiens (Human).